The sequence spans 117 residues: MAAVHLYIISFTALMISSTSEMGGYPKCSVNIEVDLIVGADMVVLIVLTQFQRVITQLPNKCQLIFNASYLPFLFTRTIKISKVERQQGERSKMAMKSKIELKLIHKGSHFYIQLPI.

Residues 1-20 form the signal peptide; sequence MAAVHLYIISFTALMISSTS.

This is an uncharacterized protein from Saccharomyces cerevisiae (strain ATCC 204508 / S288c) (Baker's yeast).